Here is a 221-residue protein sequence, read N- to C-terminus: PKHD-type hydroxylase PMT9312_1262 (221 aa).

In terms of domain architecture, Fe2OG dioxygenase spans 80 to 174; sequence IIHGIMFTKS…RLVCVGWIES (95 aa). Residues histidine 98, aspartate 100, and histidine 155 each contribute to the Fe cation site. Arginine 165 is a binding site for 2-oxoglutarate.

The cofactor is Fe(2+). L-ascorbate is required as a cofactor.

The polypeptide is PKHD-type hydroxylase PMT9312_1262 (Prochlorococcus marinus (strain MIT 9312)).